Here is a 641-residue protein sequence, read N- to C-terminus: Chaperone protein DnaK (641 aa).

Threonine 198 carries the post-translational modification Phosphothreonine; by autocatalysis. 3 stretches are compositionally biased toward basic and acidic residues: residues 514–529, 540–554, and 608–621; these read AEAN…EGVE, SSEK…KVSE, and AHAD…RSGD. Disordered regions lie at residues 514 to 554 and 604 to 641; these read AEAN…KVSE and QTES…KRSA. Positions 622 to 633 are enriched in acidic residues; sequence DVVDADYEEVKD.

The protein belongs to the heat shock protein 70 family.

Functionally, acts as a chaperone. The polypeptide is Chaperone protein DnaK (Sinorhizobium medicae (strain WSM419) (Ensifer medicae)).